The sequence spans 276 residues: Formamidopyrimidine-DNA glycosylase (276 aa).

Pro2 (schiff-base intermediate with DNA) is an active-site residue. The active-site Proton donor is the Glu3. Lys58 (proton donor; for beta-elimination activity) is an active-site residue. DNA-binding residues include His94, Arg112, and Arg157. The segment at 242–276 adopts an FPG-type zinc-finger fold; sequence FVYDRAGEPCRVCGAPIRQIVQGQRSTYYCPNCQR. Arg266 (proton donor; for delta-elimination activity) is an active-site residue.

The protein belongs to the FPG family. Monomer. Zn(2+) serves as cofactor.

The catalysed reaction is Hydrolysis of DNA containing ring-opened 7-methylguanine residues, releasing 2,6-diamino-4-hydroxy-5-(N-methyl)formamidopyrimidine.. The enzyme catalyses 2'-deoxyribonucleotide-(2'-deoxyribose 5'-phosphate)-2'-deoxyribonucleotide-DNA = a 3'-end 2'-deoxyribonucleotide-(2,3-dehydro-2,3-deoxyribose 5'-phosphate)-DNA + a 5'-end 5'-phospho-2'-deoxyribonucleoside-DNA + H(+). In terms of biological role, involved in base excision repair of DNA damaged by oxidation or by mutagenic agents. Acts as a DNA glycosylase that recognizes and removes damaged bases. Has a preference for oxidized purines, such as 7,8-dihydro-8-oxoguanine (8-oxoG). Has AP (apurinic/apyrimidinic) lyase activity and introduces nicks in the DNA strand. Cleaves the DNA backbone by beta-delta elimination to generate a single-strand break at the site of the removed base with both 3'- and 5'-phosphates. This chain is Formamidopyrimidine-DNA glycosylase, found in Burkholderia thailandensis (strain ATCC 700388 / DSM 13276 / CCUG 48851 / CIP 106301 / E264).